The chain runs to 189 residues: uncharacterized protein (189 aa).

4 helical membrane-spanning segments follow: residues 20-40 (FILGSVIFVEFFIFGLVYLTF), 46-66 (TIIITSGVILICLLPISIILI), 100-120 (VLLFIVGINFYLFGNLVSLNI), and 126-146 (FVLYSISAFFIIISIVVGDVI).

It to M.jannaschii MJ0795.1 and MJ1249.1.

It localises to the cell membrane. This is an uncharacterized protein from Methanocaldococcus jannaschii (strain ATCC 43067 / DSM 2661 / JAL-1 / JCM 10045 / NBRC 100440) (Methanococcus jannaschii).